The primary structure comprises 353 residues: Protein RecA (353 aa).

80–87 provides a ligand contact to ATP; that stretch reads GPESSGKT.

This sequence belongs to the RecA family.

It is found in the cytoplasm. Functionally, can catalyze the hydrolysis of ATP in the presence of single-stranded DNA, the ATP-dependent uptake of single-stranded DNA by duplex DNA, and the ATP-dependent hybridization of homologous single-stranded DNAs. It interacts with LexA causing its activation and leading to its autocatalytic cleavage. The sequence is that of Protein RecA from Chlorobium chlorochromatii (strain CaD3).